Consider the following 197-residue polypeptide: Large ribosomal subunit protein bL25 (197 aa).

It belongs to the bacterial ribosomal protein bL25 family. CTC subfamily. In terms of assembly, part of the 50S ribosomal subunit; part of the 5S rRNA/L5/L18/L25 subcomplex. Contacts the 5S rRNA. Binds to the 5S rRNA independently of L5 and L18.

This is one of the proteins that binds to the 5S RNA in the ribosome where it forms part of the central protuberance. This chain is Large ribosomal subunit protein bL25, found in Pseudomonas putida (strain GB-1).